The chain runs to 429 residues: Lysophosphatidic acid phosphatase type 6 (429 aa).

Residues 1-32 (MISRVFKLRMWAPVGVLTSLTYCLHQRRVALA) constitute a mitochondrion transit peptide. Residues 58 to 169 (RHGARSPLKP…VFIRSTNIYR (112 aa)) are substrate binding. Residue histidine 59 is the Nucleophile of the active site. The active-site Proton donor is aspartate 336.

Belongs to the histidine acid phosphatase family. In terms of assembly, monomer. In terms of tissue distribution, detected in brain (at protein level).

Its subcellular location is the mitochondrion. The catalysed reaction is a phosphate monoester + H2O = an alcohol + phosphate. It carries out the reaction 1-(9Z-octadecenoyl)-sn-glycero-3-phosphate + H2O = 1-(9Z-octadecenoyl)-sn-glycerol + phosphate. Hydrolyzes lysophosphatidic acid (LPA) containing a medium length fatty acid chain to the corresponding monoacylglycerol. Has highest activity with lysophosphatidic acid containing myristate (C14:0), monounsaturated oleate (C18:1) or palmitate (C16:0), and lower activity with C18:0 and C6:0 lysophosphatidic acid. The sequence is that of Lysophosphatidic acid phosphatase type 6 (ACP6) from Bos taurus (Bovine).